A 138-amino-acid chain; its full sequence is DNA-directed RNA polymerase II subunit 4 (138 aa).

Ser2 carries the N-acetylserine modification.

This sequence belongs to the eukaryotic RPB4 RNA polymerase subunit family. Component of the RNA polymerase II complex consisting of at least 12 subunits. Interacts with NRPB7.

It is found in the nucleus. In terms of biological role, DNA-dependent RNA polymerase catalyzes the transcription of DNA into RNA using the four ribonucleoside triphosphates as substrates. Second largest component of RNA polymerase II which synthesizes mRNA precursors and many functional non-coding RNAs. Proposed to contribute to the polymerase catalytic activity and forms the polymerase active center together with the largest subunit. Pol II is the central component of the basal RNA polymerase II transcription machinery. It is composed of mobile elements that move relative to each other. In Arabidopsis thaliana (Mouse-ear cress), this protein is DNA-directed RNA polymerase II subunit 4 (NRPB4).